Reading from the N-terminus, the 395-residue chain is Elongation factor Tu (395 aa).

Residues 10-204 (KPHVNIGTIG…EVDAYIPTPE (195 aa)) enclose the tr-type G domain. Positions 19–26 (GHVDHGKT) are G1. 19–26 (GHVDHGKT) contacts GTP. Mg(2+) is bound at residue T26. A G2 region spans residues 60–64 (GITIS). Residues 81-84 (DCPG) form a G3 region. GTP contacts are provided by residues 81 to 85 (DCPGH) and 136 to 139 (NKCD). The G4 stretch occupies residues 136–139 (NKCD). Residues 174–176 (SAL) are G5.

This sequence belongs to the TRAFAC class translation factor GTPase superfamily. Classic translation factor GTPase family. EF-Tu/EF-1A subfamily. Monomer.

It localises to the cytoplasm. It carries out the reaction GTP + H2O = GDP + phosphate + H(+). Its function is as follows. GTP hydrolase that promotes the GTP-dependent binding of aminoacyl-tRNA to the A-site of ribosomes during protein biosynthesis. The protein is Elongation factor Tu of Bacillus cereus (strain G9842).